Here is a 242-residue protein sequence, read N- to C-terminus: tRNA (guanine-N(1)-)-methyltransferase (242 aa).

S-adenosyl-L-methionine-binding positions include G113 and 133 to 138 (IGDYVL).

Belongs to the RNA methyltransferase TrmD family. Homodimer.

It is found in the cytoplasm. It catalyses the reaction guanosine(37) in tRNA + S-adenosyl-L-methionine = N(1)-methylguanosine(37) in tRNA + S-adenosyl-L-homocysteine + H(+). Functionally, specifically methylates guanosine-37 in various tRNAs. The polypeptide is tRNA (guanine-N(1)-)-methyltransferase (Shewanella sediminis (strain HAW-EB3)).